A 476-amino-acid chain; its full sequence is Bifunctional protein HldE (476 aa).

The tract at residues 1–318 (MKPILPDYSQ…AEAIHGSQDT (318 aa)) is ribokinase. 195 to 198 (NMAE) lines the ATP pocket. The active site involves Asp264. Residues 344 to 476 (MTNGCFDILH…IIKAIKGGRG (133 aa)) form a cytidylyltransferase region.

In the N-terminal section; belongs to the carbohydrate kinase PfkB family. This sequence in the C-terminal section; belongs to the cytidylyltransferase family. In terms of assembly, homodimer.

The enzyme catalyses D-glycero-beta-D-manno-heptose 7-phosphate + ATP = D-glycero-beta-D-manno-heptose 1,7-bisphosphate + ADP + H(+). It carries out the reaction D-glycero-beta-D-manno-heptose 1-phosphate + ATP + H(+) = ADP-D-glycero-beta-D-manno-heptose + diphosphate. It participates in nucleotide-sugar biosynthesis; ADP-L-glycero-beta-D-manno-heptose biosynthesis; ADP-L-glycero-beta-D-manno-heptose from D-glycero-beta-D-manno-heptose 7-phosphate: step 1/4. Its pathway is nucleotide-sugar biosynthesis; ADP-L-glycero-beta-D-manno-heptose biosynthesis; ADP-L-glycero-beta-D-manno-heptose from D-glycero-beta-D-manno-heptose 7-phosphate: step 3/4. In terms of biological role, catalyzes the phosphorylation of D-glycero-D-manno-heptose 7-phosphate at the C-1 position to selectively form D-glycero-beta-D-manno-heptose-1,7-bisphosphate. Functionally, catalyzes the ADP transfer from ATP to D-glycero-beta-D-manno-heptose 1-phosphate, yielding ADP-D-glycero-beta-D-manno-heptose. The polypeptide is Bifunctional protein HldE (Vibrio atlanticus (strain LGP32) (Vibrio splendidus (strain Mel32))).